The following is a 153-amino-acid chain: MPLYEHVFLARQDASTQQVEELTTQMTGIVEGLGGKVTKTENWGVRSLTYRMNKNRKAHFVLLNIDAPSAAIAEIERQERISEDVIRYLSVRVDELEEGPSAMMRKADRDRERDDRGGGFRGERDGGGFRGDRGDRGDRGPRRPRDEETADEE.

The disordered stretch occupies residues 97–153 (EEGPSAMMRKADRDRERDDRGGGFRGERDGGGFRGDRGDRGDRGPRRPRDEETADEE). Residues 105 to 147 (RKADRDRERDDRGGGFRGERDGGGFRGDRGDRGDRGPRRPRDE) are compositionally biased toward basic and acidic residues.

The protein belongs to the bacterial ribosomal protein bS6 family.

Its function is as follows. Binds together with bS18 to 16S ribosomal RNA. The protein is Small ribosomal subunit protein bS6 of Bradyrhizobium sp. (strain BTAi1 / ATCC BAA-1182).